The chain runs to 446 residues: Probable beta-1,4-xylosyltransferase IRX9L (446 aa).

Residues Met-1–Ser-26 form a disordered region. The Cytoplasmic segment spans residues Met-1 to Arg-85. A helical; Signal-anchor for type II membrane protein membrane pass occupies residues Ala-86–Phe-106. Over Ser-107–Thr-446 the chain is Lumenal. Residues Asn-185, Asn-258, Asn-361, and Asn-411 are each glycosylated (N-linked (GlcNAc...) asparagine).

Belongs to the glycosyltransferase 43 family.

It localises to the golgi apparatus membrane. Probable beta-1,4-xylosyltransferase involved in xylan biosynthesis in cell walls. This is Probable beta-1,4-xylosyltransferase IRX9L from Oryza sativa subsp. japonica (Rice).